The following is a 583-amino-acid chain: Ferredoxin--nitrite reductase, chloroplastic (583 aa).

Residues 1–22 (MSSLSVRFLSPPLFSSTPAWPR) constitute a chloroplast transit peptide. Residues C461, C467, C502, and C506 each coordinate [4Fe-4S] cluster. C506 contacts siroheme.

Belongs to the nitrite and sulfite reductase 4Fe-4S domain family. Monomer. It depends on siroheme as a cofactor. [4Fe-4S] cluster is required as a cofactor.

It localises to the plastid. It is found in the chloroplast. The enzyme catalyses 6 oxidized [2Fe-2S]-[ferredoxin] + NH4(+) + 2 H2O = nitrite + 6 reduced [2Fe-2S]-[ferredoxin] + 8 H(+). Its pathway is nitrogen metabolism; nitrate reduction (assimilation). This chain is Ferredoxin--nitrite reductase, chloroplastic (NIR1), found in Betula pendula (European white birch).